The following is a 332-amino-acid chain: uncharacterized protein (332 aa).

The segment at 306–332 (EKNTSEVTEPKTGPSGTKDNYHLHSIF) is disordered.

This is an uncharacterized protein from Homo sapiens (Human).